Here is a 265-residue protein sequence, read N- to C-terminus: Apolipoprotein A-I (265 aa).

A signal peptide spans 1 to 18; that stretch reads MKAVVLTLAVLFLTGSQA. Repeat copies occupy residues 67–88 and 89–110. Residues 67–265 are 10 X approximate tandem repeats; the sequence is LKLVDNWDTL…IDEAAKKLTA (199 aa). The 3; half-length repeat unit spans residues 111-121; that stretch reads KDLEDVRQKTQ. Tandem repeats lie at residues 122 to 143, 144 to 165, 166 to 187, 188 to 209, and 210 to 231. Met193 is subject to Methionine sulfoxide. The 9; half-length repeat unit spans residues 232 to 242; the sequence is PVLEDIHQGLM. 2 positions are modified to methionine sulfoxide: Met242 and Met244. Repeat 10 spans residues 243–265; sequence PMWESFKTGVLNVIDEAAKKLTA.

It belongs to the apolipoprotein A1/A4/E family. As to quaternary structure, homodimer. Interacts with APOA1BP and CLU. Component of a sperm activating protein complex (SPAP), consisting of APOA1, an immunoglobulin heavy chain, an immunoglobulin light chain and albumin. Interacts with NDRG1. Interacts with SCGB3A2. Interacts with NAXE and YJEFN3. Post-translationally, glycosylated. In terms of processing, palmitoylated. Phosphorylation sites are present in the extracellular medium. Major protein of plasma HDL, also found in chylomicrons.

Its subcellular location is the secreted. Its function is as follows. Participates in the reverse transport of cholesterol from tissues to the liver for excretion by promoting cholesterol efflux from tissues and by acting as a cofactor for the lecithin cholesterol acyltransferase (LCAT). As part of the SPAP complex, activates spermatozoa motility. This is Apolipoprotein A-I (APOA1) from Tupaia belangeri (Common tree shrew).